Here is a 375-residue protein sequence, read N- to C-terminus: Actin, cytoplasmic (375 aa).

This sequence belongs to the actin family.

It is found in the cytoplasm. Its subcellular location is the cytoskeleton. It carries out the reaction ATP + H2O = ADP + phosphate + H(+). Functionally, actins are highly conserved proteins that are involved in various types of cell motility and are ubiquitously expressed in all eukaryotic cells. The sequence is that of Actin, cytoplasmic from Sterkiella nova (Ciliate).